Reading from the N-terminus, the 1028-residue chain is Beta-galactosidase (1028 aa).

The substrate site is built by Asn104 and Asp203. Position 203 (Asp203) interacts with Na(+). Residues Glu418, His420, and Glu463 each contribute to the Mg(2+) site. Substrate contacts are provided by residues Glu463 and 539–542 (EYAH). Glu463 serves as the catalytic Proton donor. Catalysis depends on Glu539, which acts as the Nucleophile. Mg(2+) is bound at residue Asn599. Na(+) is bound by residues Phe603 and Asn606. Residues Asn606 and Trp1003 each contribute to the substrate site.

It belongs to the glycosyl hydrolase 2 family. As to quaternary structure, homotetramer. The cofactor is Mg(2+). Requires Na(+) as cofactor.

The catalysed reaction is Hydrolysis of terminal non-reducing beta-D-galactose residues in beta-D-galactosides.. This is Beta-galactosidase from Enterobacter cloacae.